We begin with the raw amino-acid sequence, 336 residues long: HTH-type transcriptional regulator CdhR (336 aa).

Positions 213–311 (VQVIGEMERH…AASPSQDRAV (99 aa)) constitute an HTH araC/xylS-type domain. DNA-binding regions (H-T-H motif) lie at residues 230-251 (LELAERIQVTRRQLERLFRVHL) and 278-301 (VLQVSLACGFESPSYFSRSYRARF). Positions 305-336 (PSQDRAVLPLKAPAATPPGAPAGHRTPRAERG) are disordered.

Functionally, induces the transcription of the PA5384-PA5388 operon in response to carnitine. This operon is involved in the degradation of L-carnitine, and allows P.aeruginosa to grow on L-carnitine as the sole source of carbon and nitrogen. The polypeptide is HTH-type transcriptional regulator CdhR (cdhR) (Pseudomonas aeruginosa (strain ATCC 15692 / DSM 22644 / CIP 104116 / JCM 14847 / LMG 12228 / 1C / PRS 101 / PAO1)).